Here is a 247-residue protein sequence, read N- to C-terminus: uncharacterized protein (247 aa).

The disordered stretch occupies residues 161–187 (KEQSDATSDATTSEKNKSPECPKATTE). Basic and acidic residues predominate over residues 172–187 (TSEKNKSPECPKATTE).

This is an uncharacterized protein from Mus musculus (Mouse).